We begin with the raw amino-acid sequence, 134 residues long: DNA-directed RNA polymerase subunit omega (134 aa).

Belongs to the RNA polymerase subunit omega family. As to quaternary structure, the RNAP catalytic core consists of 2 alpha, 1 beta, 1 beta' and 1 omega subunit. When a sigma factor is associated with the core the holoenzyme is formed, which can initiate transcription.

The enzyme catalyses RNA(n) + a ribonucleoside 5'-triphosphate = RNA(n+1) + diphosphate. Functionally, promotes RNA polymerase assembly. Latches the N- and C-terminal regions of the beta' subunit thereby facilitating its interaction with the beta and alpha subunits. In Brucella anthropi (strain ATCC 49188 / DSM 6882 / CCUG 24695 / JCM 21032 / LMG 3331 / NBRC 15819 / NCTC 12168 / Alc 37) (Ochrobactrum anthropi), this protein is DNA-directed RNA polymerase subunit omega.